Reading from the N-terminus, the 348-residue chain is Dual-specificity RNA methyltransferase RlmN (348 aa).

Residue glutamate 94 is the Proton acceptor of the active site. A Radical SAM core domain is found at 100–330 (GKHNWTACIS…TAIIRASRGR (231 aa)). Cysteine 107 and cysteine 336 are joined by a disulfide. The [4Fe-4S] cluster site is built by cysteine 114, cysteine 118, and cysteine 121. Residues 163–164 (GE), serine 195, 217–219 (SLN), and asparagine 293 each bind S-adenosyl-L-methionine. Cysteine 336 acts as the S-methylcysteine intermediate in catalysis.

The protein belongs to the radical SAM superfamily. RlmN family. The cofactor is [4Fe-4S] cluster.

The protein localises to the cytoplasm. The enzyme catalyses adenosine(2503) in 23S rRNA + 2 reduced [2Fe-2S]-[ferredoxin] + 2 S-adenosyl-L-methionine = 2-methyladenosine(2503) in 23S rRNA + 5'-deoxyadenosine + L-methionine + 2 oxidized [2Fe-2S]-[ferredoxin] + S-adenosyl-L-homocysteine. The catalysed reaction is adenosine(37) in tRNA + 2 reduced [2Fe-2S]-[ferredoxin] + 2 S-adenosyl-L-methionine = 2-methyladenosine(37) in tRNA + 5'-deoxyadenosine + L-methionine + 2 oxidized [2Fe-2S]-[ferredoxin] + S-adenosyl-L-homocysteine. Specifically methylates position 2 of adenine 2503 in 23S rRNA and position 2 of adenine 37 in tRNAs. m2A2503 modification seems to play a crucial role in the proofreading step occurring at the peptidyl transferase center and thus would serve to optimize ribosomal fidelity. In Syntrophus aciditrophicus (strain SB), this protein is Dual-specificity RNA methyltransferase RlmN.